The sequence spans 513 residues: Pantetheinase (513 aa).

The first 21 residues, 1-21, serve as a signal peptide directing secretion; it reads MTTQLPAYVAILLFYVSRASC. Residue Asn38 is glycosylated (N-linked (GlcNAc...) asparagine). The CN hydrolase domain maps to 39–306; the sequence is ATLTPVSREE…GKLLLSQLDS (268 aa). Glu79 serves as the catalytic Proton acceptor. Asn130 carries N-linked (GlcNAc...) asparagine glycosylation. Lys178 serves as the catalytic Proton donor. An N-linked (GlcNAc...) asparagine glycan is attached at Asn200. Cys211 (nucleophile) is an active-site residue. Residues Asn283, Asn315, and Asn353 are each glycosylated (N-linked (GlcNAc...) asparagine). Gly491 carries GPI-anchor amidated glycine lipidation. A propeptide spans 492-513 (removed in mature form); sequence LTAQARIIMLIVIAPIVCSLSW.

It belongs to the carbon-nitrogen hydrolase superfamily. BTD/VNN family. In terms of assembly, monomer. In terms of tissue distribution, widely expressed with higher expression in spleen, kidney and blood. Overexpressed in lesional psoriatic skin.

Its subcellular location is the cell membrane. It carries out the reaction (R)-pantetheine + H2O = cysteamine + (R)-pantothenate. Its function is as follows. Amidohydrolase that hydrolyzes specifically one of the carboamide linkages in D-pantetheine thus recycling pantothenic acid (vitamin B5) and releasing cysteamine. In Homo sapiens (Human), this protein is Pantetheinase (VNN1).